A 390-amino-acid polypeptide reads, in one-letter code: Flap endonuclease 1-2 (390 aa).

The segment at 1–108 (MGIHQLMQFL…GELARRKKLK (108 aa)) is N-domain. A Mg(2+)-binding site is contributed by aspartate 34. Position 74 (arginine 74) interacts with DNA. Positions 90, 162, 164, 183, and 185 each coordinate Mg(2+). An I-domain region spans residues 126-254 (QALLQNQRTT…GTAYKLIKEY (129 aa)). Position 162 (glutamate 162) interacts with DNA. Positions 232 and 234 each coordinate DNA. A Mg(2+)-binding site is contributed by aspartate 234. An interaction with PCNA region spans residues 348–356 (FQSRLENFF). The interval 359-390 (TTKIIHPNNSKAKAKSNKKTEQPQKSGGKKKI) is disordered.

The protein belongs to the XPG/RAD2 endonuclease family. FEN1 subfamily. As to quaternary structure, interacts with PCNA. Three molecules of FEN1 bind to one PCNA trimer with each molecule binding to one PCNA monomer. PCNA stimulates the nuclease activity without altering cleavage specificity. Mg(2+) is required as a cofactor. Post-translationally, phosphorylated. Phosphorylation upon DNA damage induces relocalization to the nuclear plasma.

It is found in the nucleus. Its subcellular location is the nucleolus. It localises to the nucleoplasm. The protein resides in the mitochondrion. Functionally, structure-specific nuclease with 5'-flap endonuclease and 5'-3' exonuclease activities involved in DNA replication and repair. During DNA replication, cleaves the 5'-overhanging flap structure that is generated by displacement synthesis when DNA polymerase encounters the 5'-end of a downstream Okazaki fragment. It enters the flap from the 5'-end and then tracks to cleave the flap base, leaving a nick for ligation. Also involved in the long patch base excision repair (LP-BER) pathway, by cleaving within the apurinic/apyrimidinic (AP) site-terminated flap. Acts as a genome stabilization factor that prevents flaps from equilibrating into structures that lead to duplications and deletions. Also possesses 5'-3' exonuclease activity on nicked or gapped double-stranded DNA, and exhibits RNase H activity. Also involved in replication and repair of rDNA and in repairing mitochondrial DNA. In Paramecium tetraurelia, this protein is Flap endonuclease 1-2.